The sequence spans 97 residues: Ig heavy chain V region 914 (97 aa).

One can recognise an Ig-like domain in the interval 1 to 97; that stretch reads EVKLVESGGG…EDTAMYYCAR (97 aa).

This Mus musculus (Mouse) protein is Ig heavy chain V region 914.